Consider the following 243-residue polypeptide: Pyridoxine 5'-phosphate synthase (243 aa).

Asparagine 6 contacts 3-amino-2-oxopropyl phosphate. A 1-deoxy-D-xylulose 5-phosphate-binding site is contributed by 8–9 (DH). Arginine 17 is a binding site for 3-amino-2-oxopropyl phosphate. The active-site Proton acceptor is histidine 42. 1-deoxy-D-xylulose 5-phosphate is bound by residues arginine 44 and histidine 49. Glutamate 72 acts as the Proton acceptor in catalysis. Residue threonine 102 coordinates 1-deoxy-D-xylulose 5-phosphate. Histidine 192 serves as the catalytic Proton donor. 3-amino-2-oxopropyl phosphate is bound by residues glycine 193 and 214 to 215 (GH).

The protein belongs to the PNP synthase family. Homooctamer; tetramer of dimers.

Its subcellular location is the cytoplasm. The catalysed reaction is 3-amino-2-oxopropyl phosphate + 1-deoxy-D-xylulose 5-phosphate = pyridoxine 5'-phosphate + phosphate + 2 H2O + H(+). It functions in the pathway cofactor biosynthesis; pyridoxine 5'-phosphate biosynthesis; pyridoxine 5'-phosphate from D-erythrose 4-phosphate: step 5/5. In terms of biological role, catalyzes the complicated ring closure reaction between the two acyclic compounds 1-deoxy-D-xylulose-5-phosphate (DXP) and 3-amino-2-oxopropyl phosphate (1-amino-acetone-3-phosphate or AAP) to form pyridoxine 5'-phosphate (PNP) and inorganic phosphate. This chain is Pyridoxine 5'-phosphate synthase, found in Sulfurihydrogenibium sp. (strain YO3AOP1).